Here is a 910-residue protein sequence, read N- to C-terminus: Constitutive coactivator of peroxisome proliferator-activated receptor gamma (910 aa).

Disordered stretches follow at residues 333–416, 443–483, and 863–910; these read SDAE…VPMC, SEPR…ESRQ, and SHHA…WRRY. 3 stretches are compositionally biased toward basic and acidic residues: residues 335 to 351, 360 to 375, and 396 to 411; these read AESR…ESRQ and ESRR…EPRQ. Polar residues predominate over residues 872 to 890; it reads QGSSYHRTGSGYSRSSQGQ. Arg-885 is modified (omega-N-methylarginine). Basic and acidic residues predominate over residues 901 to 910; it reads QYEHDQWRRY.

This sequence belongs to the constitutive coactivator of PPAR-gamma family. Interacts with ESR1 and RXRA. Interacts with PPARG; in a ligand-independent manner. Widely expressed.

It localises to the nucleus. Functions as a transactivator of PPARG and ESR1. Functions in adipogenesis through PPARG activation. This chain is Constitutive coactivator of peroxisome proliferator-activated receptor gamma (FAM120B), found in Homo sapiens (Human).